We begin with the raw amino-acid sequence, 257 residues long: Imidazole glycerol phosphate synthase subunit HisF (257 aa).

Residues aspartate 12 and aspartate 131 contribute to the active site.

Belongs to the HisA/HisF family. As to quaternary structure, heterodimer of HisH and HisF.

It localises to the cytoplasm. The enzyme catalyses 5-[(5-phospho-1-deoxy-D-ribulos-1-ylimino)methylamino]-1-(5-phospho-beta-D-ribosyl)imidazole-4-carboxamide + L-glutamine = D-erythro-1-(imidazol-4-yl)glycerol 3-phosphate + 5-amino-1-(5-phospho-beta-D-ribosyl)imidazole-4-carboxamide + L-glutamate + H(+). The protein operates within amino-acid biosynthesis; L-histidine biosynthesis; L-histidine from 5-phospho-alpha-D-ribose 1-diphosphate: step 5/9. Functionally, IGPS catalyzes the conversion of PRFAR and glutamine to IGP, AICAR and glutamate. The HisF subunit catalyzes the cyclization activity that produces IGP and AICAR from PRFAR using the ammonia provided by the HisH subunit. The protein is Imidazole glycerol phosphate synthase subunit HisF of Paraburkholderia phytofirmans (strain DSM 17436 / LMG 22146 / PsJN) (Burkholderia phytofirmans).